The following is a 224-amino-acid chain: Ribonuclease T (224 aa).

Residues 20–194 (VVIDVETAGF…YDTERTAELF (175 aa)) form the Exonuclease domain. The Mg(2+) site is built by D23, E25, H181, and D186. H181 functions as the Proton donor/acceptor in the catalytic mechanism.

The protein belongs to the RNase T family. In terms of assembly, homodimer. Mg(2+) serves as cofactor.

Functionally, trims short 3' overhangs of a variety of RNA species, leaving a one or two nucleotide 3' overhang. Responsible for the end-turnover of tRNA: specifically removes the terminal AMP residue from uncharged tRNA (tRNA-C-C-A). Also appears to be involved in tRNA biosynthesis. The chain is Ribonuclease T from Enterobacter sp. (strain 638).